A 202-amino-acid polypeptide reads, in one-letter code: Outer-membrane lipoprotein carrier protein (202 aa).

The N-terminal stretch at 1–18 (MNRLFLILLLIFSHEVFS) is a signal peptide.

Belongs to the LolA family. Monomer.

It localises to the periplasm. Its function is as follows. Participates in the translocation of lipoproteins from the inner membrane to the outer membrane. Only forms a complex with a lipoprotein if the residue after the N-terminal Cys is not an aspartate (The Asp acts as a targeting signal to indicate that the lipoprotein should stay in the inner membrane). In Legionella pneumophila (strain Lens), this protein is Outer-membrane lipoprotein carrier protein.